The sequence spans 96 residues: NADH-ubiquinone oxidoreductase chain 4L (96 aa).

3 consecutive transmembrane segments (helical) span residues 1-21 (MNPT…AFYQ), 24-44 (LLSL…LMAI), and 57-77 (LPLI…VLLV).

The protein belongs to the complex I subunit 4L family.

It localises to the mitochondrion membrane. The enzyme catalyses a ubiquinone + NADH + 5 H(+)(in) = a ubiquinol + NAD(+) + 4 H(+)(out). Its function is as follows. Core subunit of the mitochondrial membrane respiratory chain NADH dehydrogenase (Complex I) which catalyzes electron transfer from NADH through the respiratory chain, using ubiquinone as an electron acceptor. Part of the enzyme membrane arm which is embedded in the lipid bilayer and involved in proton translocation. This Myxine glutinosa (Atlantic hagfish) protein is NADH-ubiquinone oxidoreductase chain 4L (MT-ND4L).